We begin with the raw amino-acid sequence, 195 residues long: Imidazoleglycerol-phosphate dehydratase (195 aa).

It belongs to the imidazoleglycerol-phosphate dehydratase family.

It is found in the cytoplasm. The catalysed reaction is D-erythro-1-(imidazol-4-yl)glycerol 3-phosphate = 3-(imidazol-4-yl)-2-oxopropyl phosphate + H2O. The protein operates within amino-acid biosynthesis; L-histidine biosynthesis; L-histidine from 5-phospho-alpha-D-ribose 1-diphosphate: step 6/9. The chain is Imidazoleglycerol-phosphate dehydratase from Shouchella clausii (strain KSM-K16) (Alkalihalobacillus clausii).